Here is a 243-residue protein sequence, read N- to C-terminus: Adenosylcobinamide-GDP ribazoletransferase (243 aa).

A run of 5 helical transmembrane segments spans residues 31–51 (LLFY…FNTL), 55–75 (APLM…SGGL), 109–129 (IAVV…LALI), 133–153 (ASVW…GLFL), and 188–208 (VLLA…CFFW).

This sequence belongs to the CobS family. Mg(2+) serves as cofactor.

It is found in the cell inner membrane. It carries out the reaction alpha-ribazole + adenosylcob(III)inamide-GDP = adenosylcob(III)alamin + GMP + H(+). It catalyses the reaction alpha-ribazole 5'-phosphate + adenosylcob(III)inamide-GDP = adenosylcob(III)alamin 5'-phosphate + GMP + H(+). It participates in cofactor biosynthesis; adenosylcobalamin biosynthesis; adenosylcobalamin from cob(II)yrinate a,c-diamide: step 7/7. In terms of biological role, joins adenosylcobinamide-GDP and alpha-ribazole to generate adenosylcobalamin (Ado-cobalamin). Also synthesizes adenosylcobalamin 5'-phosphate from adenosylcobinamide-GDP and alpha-ribazole 5'-phosphate. The sequence is that of Adenosylcobinamide-GDP ribazoletransferase from Pseudomonas syringae pv. syringae (strain B728a).